Here is a 457-residue protein sequence, read N- to C-terminus: Glutamate--tRNA ligase 1 (457 aa).

A 'HIGH' region motif is present at residues 9 to 19 (PSPTGYIHIGN). The 'KMSKS' region signature appears at 250-254 (GLSKR). Lysine 253 is an ATP binding site.

It belongs to the class-I aminoacyl-tRNA synthetase family. Glutamate--tRNA ligase type 1 subfamily. As to quaternary structure, monomer.

The protein resides in the cytoplasm. The catalysed reaction is tRNA(Glu) + L-glutamate + ATP = L-glutamyl-tRNA(Glu) + AMP + diphosphate. Its function is as follows. Catalyzes the attachment of glutamate to tRNA(Glu) in a two-step reaction: glutamate is first activated by ATP to form Glu-AMP and then transferred to the acceptor end of tRNA(Glu). The polypeptide is Glutamate--tRNA ligase 1 (Brucella abortus (strain S19)).